Reading from the N-terminus, the 530-residue chain is Bifunctional purine biosynthesis protein PurH (530 aa).

One can recognise an MGS-like domain in the interval 1-148 (MEQARPIRRA…KNHKDVAIVV (148 aa)).

This sequence belongs to the PurH family.

It carries out the reaction (6R)-10-formyltetrahydrofolate + 5-amino-1-(5-phospho-beta-D-ribosyl)imidazole-4-carboxamide = 5-formamido-1-(5-phospho-D-ribosyl)imidazole-4-carboxamide + (6S)-5,6,7,8-tetrahydrofolate. It catalyses the reaction IMP + H2O = 5-formamido-1-(5-phospho-D-ribosyl)imidazole-4-carboxamide. It participates in purine metabolism; IMP biosynthesis via de novo pathway; 5-formamido-1-(5-phospho-D-ribosyl)imidazole-4-carboxamide from 5-amino-1-(5-phospho-D-ribosyl)imidazole-4-carboxamide (10-formyl THF route): step 1/1. Its pathway is purine metabolism; IMP biosynthesis via de novo pathway; IMP from 5-formamido-1-(5-phospho-D-ribosyl)imidazole-4-carboxamide: step 1/1. The protein is Bifunctional purine biosynthesis protein PurH of Aeromonas salmonicida (strain A449).